The primary structure comprises 104 residues: Large ribosomal subunit protein eL42 (104 aa).

The segment at 22 to 56 is disordered; it reads KVSQAKKSKDNPRAQGNRRYARKQRGYGGQTKPIL.

It belongs to the eukaryotic ribosomal protein eL42 family.

The sequence is that of Large ribosomal subunit protein eL42 (RPL44) from Encephalitozoon cuniculi (strain GB-M1) (Microsporidian parasite).